The following is a 1464-amino-acid chain: DNA-directed RNA polymerase subunit beta' (1464 aa).

The Mg(2+) site is built by Asp541, Asp543, and Asp545. Residues Cys1022, Cys1098, Cys1105, and Cys1108 each contribute to the Zn(2+) site. The disordered stretch occupies residues 1435-1464 (LEDEQQQIIEVDDSDISVEDEENDFYENED).

It belongs to the RNA polymerase beta' chain family. As to quaternary structure, the RNAP catalytic core consists of 2 alpha, 1 beta, 1 beta' and 1 omega subunit. When a sigma factor is associated with the core the holoenzyme is formed, which can initiate transcription. Mg(2+) serves as cofactor. Requires Zn(2+) as cofactor.

The catalysed reaction is RNA(n) + a ribonucleoside 5'-triphosphate = RNA(n+1) + diphosphate. In terms of biological role, DNA-dependent RNA polymerase catalyzes the transcription of DNA into RNA using the four ribonucleoside triphosphates as substrates. The sequence is that of DNA-directed RNA polymerase subunit beta' from Metamycoplasma arthritidis (strain 158L3-1) (Mycoplasma arthritidis).